The chain runs to 407 residues: Heparan-sulfate 6-O-sulfotransferase 1-B (407 aa).

Over 8-14 (MVERTSK) the chain is Cytoplasmic. The helical; Signal-anchor for type II membrane protein transmembrane segment at 15–35 (FLLIVVGSVFFMLILYQYVAP) threads the bilayer. Over 36–407 (GVINFGSPHG…DYMNHIINGW (372 aa)) the chain is Lumenal. 3'-phosphoadenylyl sulfate is bound at residue 92–100 (HIQKTGGTT). Residues 122–123 (KK), Arg-139, Trp-144, and His-149 each bind substrate. The Proton acceptor role is filled by His-149. Residues Arg-183 and Ser-191 each contribute to the 3'-phosphoadenylyl sulfate site. Substrate-binding residues include His-195 and Trp-202. The N-linked (GlcNAc...) asparagine glycan is linked to Asn-262. Residue 315-317 (MQY) coordinates 3'-phosphoadenylyl sulfate. N-linked (GlcNAc...) asparagine glycosylation occurs at Asn-318. 321-322 (RA) serves as a coordination point for 3'-phosphoadenylyl sulfate. Residue Asn-329 is glycosylated (N-linked (GlcNAc...) asparagine).

Belongs to the sulfotransferase 6 family. As to expression, during early somitogenesis, first expressed in floor plate and somites. During mid-somitogenesis, expressed strongly in somites and more weakly in eye and hindbrain. During late somitogenesis, expressed in eye, hindbrain and posterior somites. At 24 hours post-fertilization (hpf), expressed in lens, forebrain, hindbrain, otic vesicle, anterior spinal cord neurons and posterior somites. At 36 hpf, expressed in the retinal ciliary marginal zone, brain, pancreas and weakly in pectoral fin. At 48 hpf, expressed in the retinal ciliary marginal zone, retinal ganglion cells, rhombomeres, otic vesicle and weakly in pectoral fin.

The protein resides in the membrane. The catalysed reaction is alpha-D-glucosaminyl-[heparan sulfate](n) + 3'-phosphoadenylyl sulfate = 6-sulfo-alpha-D-glucosaminyl-[heparan sulfate](n) + adenosine 3',5'-bisphosphate + H(+). Its function is as follows. 6-O-sulfation enzyme which catalyzes the transfer of sulfate from 3'-phosphoadenosine 5'-phosphosulfate (PAPS) to position 6 of the N-sulfoglucosamine residue (GlcNS) of heparan sulfate. This is Heparan-sulfate 6-O-sulfotransferase 1-B from Danio rerio (Zebrafish).